Reading from the N-terminus, the 137-residue chain is Small ribosomal subunit protein uS12 (137 aa).

Residues 1–57 (MPTINQLVRKPRKSKVEKPKSPALNVGYNSHKKVQTNVSSPQKRGVATRVGTMTPRK) are disordered. Asp-102 is subject to 3-methylthioaspartic acid.

This sequence belongs to the universal ribosomal protein uS12 family. Part of the 30S ribosomal subunit. Contacts proteins S8 and S17. May interact with IF1 in the 30S initiation complex.

Its function is as follows. With S4 and S5 plays an important role in translational accuracy. Interacts with and stabilizes bases of the 16S rRNA that are involved in tRNA selection in the A site and with the mRNA backbone. Located at the interface of the 30S and 50S subunits, it traverses the body of the 30S subunit contacting proteins on the other side and probably holding the rRNA structure together. The combined cluster of proteins S8, S12 and S17 appears to hold together the shoulder and platform of the 30S subunit. In Streptococcus pneumoniae (strain Hungary19A-6), this protein is Small ribosomal subunit protein uS12.